We begin with the raw amino-acid sequence, 209 residues long: 3-demethoxyubiquinol 3-hydroxylase (209 aa).

Fe cation contacts are provided by glutamate 58, glutamate 88, histidine 91, glutamate 140, glutamate 172, and histidine 175.

The protein belongs to the COQ7 family. The cofactor is Fe cation.

The protein resides in the cell membrane. It catalyses the reaction a 5-methoxy-2-methyl-3-(all-trans-polyprenyl)benzene-1,4-diol + AH2 + O2 = a 3-demethylubiquinol + A + H2O. It functions in the pathway cofactor biosynthesis; ubiquinone biosynthesis. Functionally, catalyzes the hydroxylation of 2-nonaprenyl-3-methyl-6-methoxy-1,4-benzoquinol during ubiquinone biosynthesis. This chain is 3-demethoxyubiquinol 3-hydroxylase, found in Polynucleobacter necessarius subsp. necessarius (strain STIR1).